We begin with the raw amino-acid sequence, 58 residues long: Gigasin-4 (58 aa).

In terms of tissue distribution, component of the organic matrix of calcified shell layers.

This Magallana gigas (Pacific oyster) protein is Gigasin-4.